Reading from the N-terminus, the 186-residue chain is Peptidyl-tRNA hydrolase (186 aa).

Tyrosine 17 serves as a coordination point for tRNA. Histidine 22 serves as the catalytic Proton acceptor. Residues tyrosine 64 and asparagine 66 each coordinate tRNA.

Belongs to the PTH family. As to quaternary structure, monomer.

The protein localises to the cytoplasm. It catalyses the reaction an N-acyl-L-alpha-aminoacyl-tRNA + H2O = an N-acyl-L-amino acid + a tRNA + H(+). In terms of biological role, hydrolyzes ribosome-free peptidyl-tRNAs (with 1 or more amino acids incorporated), which drop off the ribosome during protein synthesis, or as a result of ribosome stalling. Its function is as follows. Catalyzes the release of premature peptidyl moieties from peptidyl-tRNA molecules trapped in stalled 50S ribosomal subunits, and thus maintains levels of free tRNAs and 50S ribosomes. The sequence is that of Peptidyl-tRNA hydrolase from Methylacidiphilum infernorum (isolate V4) (Methylokorus infernorum (strain V4)).